Reading from the N-terminus, the 359-residue chain is Protein-glutamate methylesterase/protein-glutamine glutaminase 1 (359 aa).

A Response regulatory domain is found at serine 4–glutamate 121. Aspartate 55 bears the 4-aspartylphosphate mark. In terms of domain architecture, CheB-type methylesterase spans tyrosine 169–leucine 354. Residues serine 181, histidine 207, and aspartate 303 contribute to the active site.

It belongs to the CheB family. Phosphorylated by CheA. Phosphorylation of the N-terminal regulatory domain activates the methylesterase activity.

The protein localises to the cytoplasm. It carries out the reaction [protein]-L-glutamate 5-O-methyl ester + H2O = L-glutamyl-[protein] + methanol + H(+). The catalysed reaction is L-glutaminyl-[protein] + H2O = L-glutamyl-[protein] + NH4(+). In terms of biological role, involved in chemotaxis. Part of a chemotaxis signal transduction system that modulates chemotaxis in response to various stimuli. Catalyzes the demethylation of specific methylglutamate residues introduced into the chemoreceptors (methyl-accepting chemotaxis proteins or MCP) by CheR. Also mediates the irreversible deamidation of specific glutamine residues to glutamic acid. This Chromobacterium violaceum (strain ATCC 12472 / DSM 30191 / JCM 1249 / CCUG 213 / NBRC 12614 / NCIMB 9131 / NCTC 9757 / MK) protein is Protein-glutamate methylesterase/protein-glutamine glutaminase 1.